A 126-amino-acid polypeptide reads, in one-letter code: Fluoride-specific ion channel FluC (126 aa).

Transmembrane regions (helical) follow at residues 4–24, 35–55, 67–87, and 97–117; these read SLLSIACGAVLGAWLRWFVGL, LGTILVNLVGGFIIGFAIALF, FVITGFCGALTTFSTFSAEVI, and FAIALITIHLMGSLLCTVLGL. Na(+)-binding residues include Gly-74 and Thr-77.

This sequence belongs to the fluoride channel Fluc/FEX (TC 1.A.43) family.

It is found in the cell inner membrane. The catalysed reaction is fluoride(in) = fluoride(out). With respect to regulation, na(+) is not transported, but it plays an essential structural role and its presence is essential for fluoride channel function. Functionally, fluoride-specific ion channel. Important for reducing fluoride concentration in the cell, thus reducing its toxicity. This Acinetobacter baylyi (strain ATCC 33305 / BD413 / ADP1) protein is Fluoride-specific ion channel FluC.